Reading from the N-terminus, the 259-residue chain is FAD-linked sulfhydryl oxidase (259 aa).

It belongs to the baculoviridae p33 family. As to quaternary structure, homodimer.

The protein resides in the host cytoplasm. It is found in the host nucleus. It catalyses the reaction 2 R'C(R)SH + O2 = R'C(R)S-S(R)CR' + H2O2. Its function is as follows. Functional FAD-linked sulfhydryl oxidase that is required for infectious budded virion (BV) production and for the formation of enveloped occluded virion (ODV). The polypeptide is FAD-linked sulfhydryl oxidase (P33) (Lepidoptera (butterflies and moths)).